Consider the following 404-residue polypeptide: Nuclear receptor subfamily 2 group F member 6 (404 aa).

The segment covering 1 to 15 has biased composition (gly residues); sequence MAMVTGGWGGPGGDT. The disordered stretch occupies residues 1–49; that stretch reads MAMVTGGWGGPGGDTNGVDKAGGYPRAAEDDSASPPGAASDAEPGDEER. Low complexity predominate over residues 33–42; sequence ASPPGAASDA. Residues serine 34 and serine 40 each carry the phosphoserine modification. A DNA-binding region (nuclear receptor) is located at residues 53-128; the sequence is QVDCVVCGDK…VGMRKEAVQR (76 aa). The NR C4-type zinc-finger motif lies at 56–76; it reads CVVCGDKSSGKHYGVFTCEGC. Serine 83 is modified (phosphoserine). The NR C4-type zinc finger occupies 92–116; it reads CRSNRDCQIDQHHRNQCQYCRLKKC. The NR LBD domain occupies 165–393; the sequence is PVSELIAQLL…TLIRDMLLSG (229 aa). The interval 327 to 404 is important for dimerization; that stretch reads LQEKAQVALT…TFNWPYGSGQ (78 aa).

Belongs to the nuclear hormone receptor family. NR2 subfamily. Binds DNA as dimer; homodimer and heterodimer with NR2F2 and probably NR2F1. Interacts with THRB. Expressed in heart, placenta, liver, skeletal muscle, kidney and pancreas.

It is found in the nucleus. Its function is as follows. Transcription factor predominantly involved in transcriptional repression. Binds to promoter/enhancer response elements that contain the imperfect 5'-AGGTCA-3' direct or inverted repeats with various spacings which are also recognized by other nuclear hormone receptors. Involved in modulation of hormonal responses. Represses transcriptional activity of the lutropin-choriogonadotropic hormone receptor/LHCGR gene, the renin/REN gene and the oxytocin-neurophysin/OXT gene. Represses the triiodothyronine-dependent and -independent transcriptional activity of the thyroid hormone receptor gene in a cell type-specific manner. The corepressing function towards thyroid hormone receptor beta/THRB involves at least in part the inhibition of THRB binding to triiodothyronine response elements (TREs) by NR2F6. Inhibits NFATC transcription factor DNA binding and subsequently its transcriptional activity. Acts as transcriptional repressor of IL-17 expression in Th-17 differentiated CD4(+) T cells and may be involved in induction and/or maintenance of peripheral immunological tolerance and autoimmunity. Involved in development of forebrain circadian clock; is required early in the development of the locus coeruleus (LC). This chain is Nuclear receptor subfamily 2 group F member 6 (NR2F6), found in Homo sapiens (Human).